Consider the following 676-residue polypeptide: Mediator of RNA polymerase II transcription subunit 17 (676 aa).

Disordered regions lie at residues 27–68 and 117–176; these read IGSK…QFSN and IEND…TQDT. The span at 29–40 shows a compositional bias: low complexity; the sequence is SKSTSPHSNSTS. Basic and acidic residues-rich tracts occupy residues 47–56 and 120–134; these read HNTENEEVDN and DNGK…KAED. Positions 135–145 are enriched in acidic residues; sequence GIDTMDIDQND. Residues 146 to 160 are compositionally biased toward polar residues; that stretch reads NSEANTNDIGYNEWS.

The protein belongs to the Mediator complex subunit 17 family. In terms of assembly, component of the Mediator complex.

It localises to the nucleus. Component of the Mediator complex, a coactivator involved in the regulated transcription of nearly all RNA polymerase II-dependent genes. Mediator functions as a bridge to convey information from gene-specific regulatory proteins to the basal RNA polymerase II transcription machinery. Mediator is recruited to promoters by direct interactions with regulatory proteins and serves as a scaffold for the assembly of a functional preinitiation complex with RNA polymerase II and the general transcription factors. The polypeptide is Mediator of RNA polymerase II transcription subunit 17 (SRB4) (Candida glabrata (strain ATCC 2001 / BCRC 20586 / JCM 3761 / NBRC 0622 / NRRL Y-65 / CBS 138) (Yeast)).